The primary structure comprises 463 residues: Chaperone SurA (463 aa).

The signal sequence occupies residues 1–25 (MTKPFSVVLASLLAITSTISPLASA). PpiC domains lie at 174–276 (GSKY…KLME) and 289–388 (VTEY…QRVG). 2 disordered regions span residues 329–348 (ATAKESSEDTNSRGQGGDLG) and 434–463 (GDRADNNATAAPAKSADPALPAPPPAKPTR). The span at 439–452 (NNATAAPAKSADPA) shows a compositional bias: low complexity. Over residues 453 to 463 (LPAPPPAKPTR) the composition is skewed to pro residues.

It localises to the periplasm. It catalyses the reaction [protein]-peptidylproline (omega=180) = [protein]-peptidylproline (omega=0). In terms of biological role, chaperone involved in the correct folding and assembly of outer membrane proteins. Recognizes specific patterns of aromatic residues and the orientation of their side chains, which are found more frequently in integral outer membrane proteins. May act in both early periplasmic and late outer membrane-associated steps of protein maturation. This chain is Chaperone SurA, found in Xanthomonas oryzae pv. oryzae (strain KACC10331 / KXO85).